The primary structure comprises 92 residues: Small ribosomal subunit protein uS19c (92 aa).

Belongs to the universal ribosomal protein uS19 family.

The protein resides in the plastid. Its subcellular location is the chloroplast. Functionally, protein S19 forms a complex with S13 that binds strongly to the 16S ribosomal RNA. The protein is Small ribosomal subunit protein uS19c of Acorus calamus (Sweet flag).